The following is a 380-amino-acid chain: Lipid-A-disaccharide synthase (380 aa).

It belongs to the LpxB family.

The catalysed reaction is a lipid X + a UDP-2-N,3-O-bis[(3R)-3-hydroxyacyl]-alpha-D-glucosamine = a lipid A disaccharide + UDP + H(+). It participates in bacterial outer membrane biogenesis; LPS lipid A biosynthesis. Its function is as follows. Condensation of UDP-2,3-diacylglucosamine and 2,3-diacylglucosamine-1-phosphate to form lipid A disaccharide, a precursor of lipid A, a phosphorylated glycolipid that anchors the lipopolysaccharide to the outer membrane of the cell. The sequence is that of Lipid-A-disaccharide synthase from Francisella tularensis subsp. tularensis (strain FSC 198).